A 98-amino-acid polypeptide reads, in one-letter code: NADH-ubiquinone oxidoreductase chain 4L (98 aa).

Helical transmembrane passes span Pro2 to Phe22, Ser29 to Leu49, and Ile61 to Val81.

It belongs to the complex I subunit 4L family. As to quaternary structure, core subunit of respiratory chain NADH dehydrogenase (Complex I) which is composed of 45 different subunits.

The protein localises to the mitochondrion inner membrane. The catalysed reaction is a ubiquinone + NADH + 5 H(+)(in) = a ubiquinol + NAD(+) + 4 H(+)(out). Its function is as follows. Core subunit of the mitochondrial membrane respiratory chain NADH dehydrogenase (Complex I) which catalyzes electron transfer from NADH through the respiratory chain, using ubiquinone as an electron acceptor. Part of the enzyme membrane arm which is embedded in the lipid bilayer and involved in proton translocation. The chain is NADH-ubiquinone oxidoreductase chain 4L (MT-ND4L) from Microcebus mamiratra (Claire's mouse lemur).